The primary structure comprises 152 residues: Deoxyuridine 5'-triphosphate nucleotidohydrolase (152 aa).

Substrate contacts are provided by residues 71-73, N84, 88-90, and K98; these read RSG and LID.

It belongs to the dUTPase family. Mg(2+) is required as a cofactor.

The enzyme catalyses dUTP + H2O = dUMP + diphosphate + H(+). The protein operates within pyrimidine metabolism; dUMP biosynthesis; dUMP from dCTP (dUTP route): step 2/2. Functionally, this enzyme is involved in nucleotide metabolism: it produces dUMP, the immediate precursor of thymidine nucleotides and it decreases the intracellular concentration of dUTP so that uracil cannot be incorporated into DNA. This is Deoxyuridine 5'-triphosphate nucleotidohydrolase from Legionella pneumophila (strain Paris).